Reading from the N-terminus, the 321-residue chain is uncharacterized protein (321 aa).

This is an uncharacterized protein from Sinorhizobium fredii (strain NBRC 101917 / NGR234).